The primary structure comprises 149 residues: Deoxyuridine 5'-triphosphate nucleotidohydrolase (149 aa).

Residues 65–67, Asn78, 82–84, and Lys92 contribute to the substrate site; these read RSG and TID.

It belongs to the dUTPase family. The cofactor is Mg(2+).

The enzyme catalyses dUTP + H2O = dUMP + diphosphate + H(+). It participates in pyrimidine metabolism; dUMP biosynthesis; dUMP from dCTP (dUTP route): step 2/2. This enzyme is involved in nucleotide metabolism: it produces dUMP, the immediate precursor of thymidine nucleotides and it decreases the intracellular concentration of dUTP so that uracil cannot be incorporated into DNA. The sequence is that of Deoxyuridine 5'-triphosphate nucleotidohydrolase from Chlorobium chlorochromatii (strain CaD3).